The following is a 778-amino-acid chain: Endonuclease MutS2 (778 aa).

Residue Gly-328–Thr-335 participates in ATP binding. The region spanning Leu-702–Lys-777 is the Smr domain.

Belongs to the DNA mismatch repair MutS family. MutS2 subfamily. In terms of assembly, homodimer. Binds to stalled ribosomes, contacting rRNA.

Functionally, endonuclease that is involved in the suppression of homologous recombination and thus may have a key role in the control of bacterial genetic diversity. Acts as a ribosome collision sensor, splitting the ribosome into its 2 subunits. Detects stalled/collided 70S ribosomes which it binds and splits by an ATP-hydrolysis driven conformational change. Acts upstream of the ribosome quality control system (RQC), a ribosome-associated complex that mediates the extraction of incompletely synthesized nascent chains from stalled ribosomes and their subsequent degradation. Probably generates substrates for RQC. This chain is Endonuclease MutS2, found in Streptococcus pneumoniae (strain Taiwan19F-14).